We begin with the raw amino-acid sequence, 616 residues long: Chaperone protein HscA (616 aa).

This sequence belongs to the heat shock protein 70 family.

Its function is as follows. Chaperone involved in the maturation of iron-sulfur cluster-containing proteins. Has a low intrinsic ATPase activity which is markedly stimulated by HscB. Involved in the maturation of IscU. This chain is Chaperone protein HscA, found in Salmonella agona (strain SL483).